A 154-amino-acid polypeptide reads, in one-letter code: Interleukin-2 (154 aa).

A signal peptide spans 1–20; sequence MYKLQFLSCIALTLALVANS. The O-linked (GalNAc...) threonine glycan is linked to threonine 23. A disulfide bond links cysteine 78 and cysteine 126. N-linked (GlcNAc...) asparagine glycosylation occurs at asparagine 111.

The protein belongs to the IL-2 family.

The protein localises to the secreted. Its function is as follows. Cytokine produced by activated CD4-positive helper T-cells and to a lesser extend activated CD8-positive T-cells and natural killer (NK) cells that plays pivotal roles in the immune response and tolerance. Binds to a receptor complex composed of either the high-affinity trimeric IL-2R (IL2RA/CD25, IL2RB/CD122 and IL2RG/CD132) or the low-affinity dimeric IL-2R (IL2RB and IL2RG). Interaction with the receptor leads to oligomerization and conformation changes in the IL-2R subunits resulting in downstream signaling starting with phosphorylation of JAK1 and JAK3. In turn, JAK1 and JAK3 phosphorylate the receptor to form a docking site leading to the phosphorylation of several substrates including STAT5. This process leads to activation of several pathways including STAT, phosphoinositide-3-kinase/PI3K and mitogen-activated protein kinase/MAPK pathways. Functions as a T-cell growth factor and can increase NK-cell cytolytic activity as well. Promotes strong proliferation of activated B-cells and subsequently immunoglobulin production. Plays a pivotal role in regulating the adaptive immune system by controlling the survival and proliferation of regulatory T-cells, which are required for the maintenance of immune tolerance. Moreover, participates in the differentiation and homeostasis of effector T-cell subsets, including Th1, Th2, Th17 as well as memory CD8-positive T-cells. The protein is Interleukin-2 (IL2) of Camelus bactrianus (Bactrian camel).